The chain runs to 602 residues: Protein SHORT-ROOT 1 (602 aa).

Residues 12–55 (AASEQQQQQQQSASYNSRSTTSSGSRSSSHQTNASYSYYHHSSN) show a composition bias toward low complexity. Disordered stretches follow at residues 12–69 (AASE…YYYG), 101–145 (DFSS…TAAG), and 165–185 (DFSSPASSSGGGTASSGAVGG). Gly residues predominate over residues 56–68 (SGGGGGGGGGYYY). The segment covering 122–145 (PPASSTPTGTAPTPPLSTSSTAAG) has biased composition (low complexity). Residues 173–185 (SGGGTASSGAVGG) show a composition bias toward gly residues. The 419-residue stretch at 183 to 601 (VGGGGGGRWA…QPLVWASAWR (419 aa)) folds into the GRAS domain. The interval 190–253 (RWASQLLLEC…LTASGPRTLR (64 aa)) is leucine repeat I (LRI). Residues 272–349 (ALRFQELSPW…PHLSITTVVS (78 aa)) form a VHIID region. The short motif at 311 to 315 (FHILD) is the VHIID element. Residues 365–401 (EIGQRMEKFARLMGVPFRFRAVHHSGDLAELDLDALD) are leucine repeat II (LRII). Residues 411-517 (LAVNCVNSLR…ERGAGRAIVD (107 aa)) form a PFYRE region. Residues 520-601 (SCPASESMER…QPLVWASAWR (82 aa)) are SAW.

Belongs to the GRAS family. As to quaternary structure, interacts with SCR1. Interacts with SMOS1. As to expression, expressed in leaves and roots. Detected in the stele, the endodermis and part of the cortex.

It is found in the nucleus. Transcription factor required for the asymmetric cell division involved in radial pattern formation in roots. Essential for both cell division and cell specification. This Oryza sativa subsp. japonica (Rice) protein is Protein SHORT-ROOT 1.